We begin with the raw amino-acid sequence, 414 residues long: MENPSPTRTTNLQRIRSLYRLQEDKNNLNIPEPINGKVQEIDTKESLENVDRYGNYRSDFNVNNLGFYKVSKDPTLDKPNPAKRLGNKLIGHDDMLKYVDESIFMVVPGESHDRNEISAKELSRIQKWKSMCSIHLVSGNQLHSFRKTRKLILRTFKGIPDCWRSIAWWSFLVDSLPDKKLIDKYYQLNEQICDYDVQIDLDVPRTAATHFLFRKRYIGGQRLLFRVLHAVALYIPRVGYVQGMASIAATLLIYYPEEQAFIMMVNLLENRGMGDLFSSGFDTLLKAFDMLKHELSFTQSGRHLAEIGAEPSAFATRWYLTVFHQCVPFHTQLRIWDLLFLLGGSKGQTVRLLQATSLAVIQGMWDTLIDADFEVVMQALSGVIPIQNDNALLARIQLFWEKMPSENSSKSKRN.

Residues 158–343 enclose the Rab-GAP TBC domain; that stretch reads GIPDCWRSIA…RIWDLLFLLG (186 aa).

The protein resides in the cytoplasm. It localises to the nucleus. The protein is TBC domain-containing protein C1778.09 of Schizosaccharomyces pombe (strain 972 / ATCC 24843) (Fission yeast).